Consider the following 296-residue polypeptide: 4-hydroxy-tetrahydrodipicolinate synthase (296 aa).

Thr-45 is a binding site for pyruvate. The active-site Proton donor/acceptor is the Tyr-133. Residue Lys-161 is the Schiff-base intermediate with substrate of the active site. Ile-203 is a binding site for pyruvate.

It belongs to the DapA family. Homotetramer; dimer of dimers.

Its subcellular location is the cytoplasm. It catalyses the reaction L-aspartate 4-semialdehyde + pyruvate = (2S,4S)-4-hydroxy-2,3,4,5-tetrahydrodipicolinate + H2O + H(+). It functions in the pathway amino-acid biosynthesis; L-lysine biosynthesis via DAP pathway; (S)-tetrahydrodipicolinate from L-aspartate: step 3/4. In terms of biological role, catalyzes the condensation of (S)-aspartate-beta-semialdehyde [(S)-ASA] and pyruvate to 4-hydroxy-tetrahydrodipicolinate (HTPA). In Idiomarina loihiensis (strain ATCC BAA-735 / DSM 15497 / L2-TR), this protein is 4-hydroxy-tetrahydrodipicolinate synthase.